The following is a 303-amino-acid chain: Bifunctional protein FolD 2 (303 aa).

Residues 169–171 (GRS), Ser194, and Ile235 each bind NADP(+).

This sequence belongs to the tetrahydrofolate dehydrogenase/cyclohydrolase family. In terms of assembly, homodimer.

The catalysed reaction is (6R)-5,10-methylene-5,6,7,8-tetrahydrofolate + NADP(+) = (6R)-5,10-methenyltetrahydrofolate + NADPH. The enzyme catalyses (6R)-5,10-methenyltetrahydrofolate + H2O = (6R)-10-formyltetrahydrofolate + H(+). It participates in one-carbon metabolism; tetrahydrofolate interconversion. Catalyzes the oxidation of 5,10-methylenetetrahydrofolate to 5,10-methenyltetrahydrofolate and then the hydrolysis of 5,10-methenyltetrahydrofolate to 10-formyltetrahydrofolate. This is Bifunctional protein FolD 2 from Pseudomonas putida (strain GB-1).